Reading from the N-terminus, the 250-residue chain is UDP-2,3-diacylglucosamine hydrolase (250 aa).

Residues aspartate 8, histidine 10, aspartate 41, asparagine 79, and histidine 114 each coordinate Mn(2+). Residue 79-80 (NR) participates in substrate binding. Substrate-binding residues include aspartate 122, serine 160, aspartate 172, glutamine 175, and histidine 203. Residues histidine 203 and histidine 205 each contribute to the Mn(2+) site.

The protein belongs to the LpxH family. The cofactor is Mn(2+).

It localises to the cell inner membrane. The enzyme catalyses UDP-2-N,3-O-bis[(3R)-3-hydroxytetradecanoyl]-alpha-D-glucosamine + H2O = 2-N,3-O-bis[(3R)-3-hydroxytetradecanoyl]-alpha-D-glucosaminyl 1-phosphate + UMP + 2 H(+). The protein operates within glycolipid biosynthesis; lipid IV(A) biosynthesis; lipid IV(A) from (3R)-3-hydroxytetradecanoyl-[acyl-carrier-protein] and UDP-N-acetyl-alpha-D-glucosamine: step 4/6. Hydrolyzes the pyrophosphate bond of UDP-2,3-diacylglucosamine to yield 2,3-diacylglucosamine 1-phosphate (lipid X) and UMP by catalyzing the attack of water at the alpha-P atom. Involved in the biosynthesis of lipid A, a phosphorylated glycolipid that anchors the lipopolysaccharide to the outer membrane of the cell. The polypeptide is UDP-2,3-diacylglucosamine hydrolase (Xylella fastidiosa (strain M12)).